A 68-amino-acid chain; its full sequence is uncharacterized protein (68 aa).

This is an uncharacterized protein from Haemophilus influenzae (strain ATCC 51907 / DSM 11121 / KW20 / Rd).